The primary structure comprises 449 residues: Neuraminidase (449 aa).

The Intravirion segment spans residues 1–6 (MNPNQK). The chain crosses the membrane as a helical span at residues 7–27 (IIAIGSICMVIGIVSLMLQIG). An involved in apical transport and lipid raft association region spans residues 11-33 (GSICMVIGIVSLMLQIGNMISIW). The Virion surface segment spans residues 28–449 (NMISIWISHS…GAELPFTIDK (422 aa)). The segment at 36-70 (HSIQTGNQRQAEPISNTKVLNEKAVASVTLAGNSS) is hypervariable stalk region. The N-linked (GlcNAc...) asparagine; by host glycan is linked to Asn68. The head of neuraminidase stretch occupies residues 71 to 449 (LCPISGWAVH…GAELPFTIDK (379 aa)). 8 cysteine pairs are disulfide-bonded: Cys72–Cys397, Cys104–Cys109, Cys164–Cys211, Cys213–Cys218, Cys259–Cys272, Cys261–Cys270, Cys298–Cys315, and Cys401–Cys426. Substrate is bound at residue Arg98. The N-linked (GlcNAc...) asparagine; by host glycan is linked to Asn126. The active-site Proton donor/acceptor is the Asp131. Arg132 contributes to the substrate binding site. Asn215 is a glycosylation site (N-linked (GlcNAc...) asparagine; by host). A substrate-binding site is contributed by 257–258 (EE). Arg273 lines the substrate pocket. Residues Asp274, Gly278, and Asp304 each coordinate Ca(2+). Residue Arg348 coordinates substrate. Tyr382 serves as the catalytic Nucleophile.

The protein belongs to the glycosyl hydrolase 34 family. Homotetramer. Ca(2+) serves as cofactor. Post-translationally, N-glycosylated.

Its subcellular location is the virion membrane. The protein localises to the host apical cell membrane. It catalyses the reaction Hydrolysis of alpha-(2-&gt;3)-, alpha-(2-&gt;6)-, alpha-(2-&gt;8)- glycosidic linkages of terminal sialic acid residues in oligosaccharides, glycoproteins, glycolipids, colominic acid and synthetic substrates.. Inhibited by the neuraminidase inhibitors zanamivir (Relenza) and oseltamivir (Tamiflu). These drugs interfere with the release of progeny virus from infected cells and are effective against all influenza strains. Resistance to neuraminidase inhibitors is quite rare. Its function is as follows. Catalyzes the removal of terminal sialic acid residues from viral and cellular glycoconjugates. Cleaves off the terminal sialic acids on the glycosylated HA during virus budding to facilitate virus release. Additionally helps virus spread through the circulation by further removing sialic acids from the cell surface. These cleavages prevent self-aggregation and ensure the efficient spread of the progeny virus from cell to cell. Otherwise, infection would be limited to one round of replication. Described as a receptor-destroying enzyme because it cleaves a terminal sialic acid from the cellular receptors. May facilitate viral invasion of the upper airways by cleaving the sialic acid moieties on the mucin of the airway epithelial cells. Likely to plays a role in the budding process through its association with lipid rafts during intracellular transport. May additionally display a raft-association independent effect on budding. Plays a role in the determination of host range restriction on replication and virulence. Sialidase activity in late endosome/lysosome traffic seems to enhance virus replication. This is Neuraminidase from Aves (Cat).